A 451-amino-acid polypeptide reads, in one-letter code: Adenylyltransferase and sulfurtransferase MOCS3-2 (451 aa).

Positions 42-62 are disordered; sequence GEDSDEAEESSNDMPTPQTKL. Acidic residues predominate over residues 43–52; it reads EDSDEAEESS. Residue Thr-60 is modified to Phosphothreonine. Residues Gly-99, Asp-120, 127-131, Lys-144, and 188-189 each bind ATP; these read SNLHR and DN. The Zn(2+) site is built by Cys-229 and Cys-232. Residue Cys-246 is the Glycyl thioester intermediate; for adenylyltransferase activity of the active site. Cys-304 and Cys-307 together coordinate Zn(2+). The Rhodanese domain maps to 353–449; the sequence is QSQPHLLLDV…WTGSVDATFP (97 aa). The active-site Cysteine persulfide intermediate; for sulfurtransferase activity is the Cys-408.

This sequence in the N-terminal section; belongs to the HesA/MoeB/ThiF family. UBA4 subfamily. Requires Zn(2+) as cofactor.

It localises to the cytoplasm. It carries out the reaction [molybdopterin-synthase sulfur-carrier protein]-C-terminal Gly-Gly + ATP + H(+) = [molybdopterin-synthase sulfur-carrier protein]-C-terminal Gly-Gly-AMP + diphosphate. The catalysed reaction is [molybdopterin-synthase sulfur-carrier protein]-C-terminal Gly-Gly-AMP + S-sulfanyl-L-cysteinyl-[cysteine desulfurase] + AH2 = [molybdopterin-synthase sulfur-carrier protein]-C-terminal-Gly-aminoethanethioate + L-cysteinyl-[cysteine desulfurase] + A + AMP + 2 H(+). It participates in tRNA modification; 5-methoxycarbonylmethyl-2-thiouridine-tRNA biosynthesis. It functions in the pathway cofactor biosynthesis; molybdopterin biosynthesis. Its function is as follows. Plays a central role in 2-thiolation of mcm(5)S(2)U at tRNA wobble positions of cytosolic tRNA(Lys), tRNA(Glu) and tRNA(Gln). Also essential during biosynthesis of the molybdenum cofactor. Acts by mediating the C-terminal thiocarboxylation of sulfur carriers URM1 and MOCS2A. Its N-terminus first activates URM1 and MOCS2A as acyl-adenylates (-COAMP), then the persulfide sulfur on the catalytic cysteine is transferred to URM1 and MOCS2A to form thiocarboxylation (-COSH) of their C-terminus. The reaction probably involves hydrogen sulfide that is generated from the persulfide intermediate and that acts as a nucleophile towards URM1 and MOCS2A. Subsequently, a transient disulfide bond is formed. Does not use thiosulfate as sulfur donor; NFS1 probably acting as a sulfur donor for thiocarboxylation reactions. In Drosophila pseudoobscura pseudoobscura (Fruit fly), this protein is Adenylyltransferase and sulfurtransferase MOCS3-2.